Here is a 249-residue protein sequence, read N- to C-terminus: Ribosomal RNA small subunit methyltransferase J (249 aa).

S-adenosyl-L-methionine is bound by residues 99-100, 115-116, 151-152, and D169; these read RD, ER, and SS.

It belongs to the methyltransferase superfamily. RsmJ family.

It localises to the cytoplasm. It catalyses the reaction guanosine(1516) in 16S rRNA + S-adenosyl-L-methionine = N(2)-methylguanosine(1516) in 16S rRNA + S-adenosyl-L-homocysteine + H(+). Specifically methylates the guanosine in position 1516 of 16S rRNA. The polypeptide is Ribosomal RNA small subunit methyltransferase J (Shewanella oneidensis (strain ATCC 700550 / JCM 31522 / CIP 106686 / LMG 19005 / NCIMB 14063 / MR-1)).